A 723-amino-acid chain; its full sequence is Fatty acid oxidation complex subunit alpha (723 aa).

Positions 1–189 (MIYQAKTLQV…KVGLLDAIVD (189 aa)) are enoyl-CoA hydratase/isomerase. Asp296 lines the substrate pocket. The segment at 311 to 723 (SQDTQHAAVL…FYSAQQVSAL (413 aa)) is 3-hydroxyacyl-CoA dehydrogenase. NAD(+) contacts are provided by residues Met325, Asp344, 401–403 (VVE), Lys408, and Ser430. The For 3-hydroxyacyl-CoA dehydrogenase activity role is filled by His451. Asn454 contributes to the NAD(+) binding site. Residues Asn501 and Tyr661 each contribute to the substrate site.

It in the N-terminal section; belongs to the enoyl-CoA hydratase/isomerase family. The protein in the C-terminal section; belongs to the 3-hydroxyacyl-CoA dehydrogenase family. Heterotetramer of two alpha chains (FadB) and two beta chains (FadA).

It catalyses the reaction a (3S)-3-hydroxyacyl-CoA + NAD(+) = a 3-oxoacyl-CoA + NADH + H(+). The catalysed reaction is a (3S)-3-hydroxyacyl-CoA = a (2E)-enoyl-CoA + H2O. It carries out the reaction a 4-saturated-(3S)-3-hydroxyacyl-CoA = a (3E)-enoyl-CoA + H2O. The enzyme catalyses (3S)-3-hydroxybutanoyl-CoA = (3R)-3-hydroxybutanoyl-CoA. It catalyses the reaction a (3Z)-enoyl-CoA = a 4-saturated (2E)-enoyl-CoA. The catalysed reaction is a (3E)-enoyl-CoA = a 4-saturated (2E)-enoyl-CoA. It functions in the pathway lipid metabolism; fatty acid beta-oxidation. Functionally, involved in the aerobic and anaerobic degradation of long-chain fatty acids via beta-oxidation cycle. Catalyzes the formation of 3-oxoacyl-CoA from enoyl-CoA via L-3-hydroxyacyl-CoA. It can also use D-3-hydroxyacyl-CoA and cis-3-enoyl-CoA as substrate. This Vibrio cholerae serotype O1 (strain ATCC 39315 / El Tor Inaba N16961) protein is Fatty acid oxidation complex subunit alpha.